The chain runs to 136 residues: MARTKQTARKSTGGKAPRKQLATKAARKSAPASGGVKKPHRYRPGTVALREIRRYQKSTELLIRRAPFQRLVREIAQDFKTDLRFQSSAVMALQEACEAYLVGLFEDTNLCAIHAKRVTIMPKDIQLARRIRGERA.

The interval 1 to 43 (MARTKQTARKSTGGKAPRKQLATKAARKSAPASGGVKKPHRYR) is disordered. 2 positions are modified to N6,N6,N6-trimethyllysine; alternate: Lys5 and Lys10. N6,N6-dimethyllysine; alternate occurs at positions 5 and 10. N6-acetyllysine; alternate is present on residues Lys5 and Lys10. N6-methyllysine; alternate is present on Lys5. Ser11 is modified (phosphoserine). 2 positions are modified to N6-acetyllysine: Lys15 and Lys24. Lys28 bears the N6,N6,N6-trimethyllysine; alternate mark. An N6,N6-dimethyllysine; alternate modification is found at Lys28. Position 28 is an N6-methyllysine; alternate (Lys28). Ser29 is modified (phosphoserine). At Lys37 the chain carries N6,N6,N6-trimethyllysine; alternate. The residue at position 37 (Lys37) is an N6,N6-dimethyllysine; alternate. The residue at position 37 (Lys37) is an N6-methyllysine; alternate. The residue at position 80 (Lys80) is an N6-methyllysine.

It belongs to the histone H3 family. The nucleosome is a histone octamer containing two molecules each of H2A, H2B, H3 and H4 assembled in one H3-H4 heterotetramer and two H2A-H2B heterodimers. The octamer wraps approximately 147 bp of DNA. Interacts (via N-terminal tail mono-acetylated on Lys-15) with swsn-4 (via Bromo domain); the interaction is direct. Post-translationally, phosphorylated at Ser-11 and Ser-29 during M phase. Phosphorylation of Ser-11 requires air-2 but not air-1. Dephosphorylated by gsp-1 and/or gsp-2 during chromosome segregation. Acetylation is generally linked to gene activation. In terms of processing, methylation at Lys-5 is linked to gene activation and is absent from male inactive X chromosome chromatin. Methylation at Lys-10 is linked to gene repression and is enriched in male inactive X chromosome chromatin. Methylation at Lys-37 occurs on the entire length of autosomes during meiotic prophase. Trimethylation at Lys-10 and Lys-37 is specifically antagonized by jmjd-2. Dimethylation and trimethylation at Lys-28 occurs in all nuclei. The mes-2-mes-3-mes-6 complex may be responsible for Lys-28 methylation in most of the germline and in the early embryo.

The protein localises to the nucleus. It is found in the chromosome. Its function is as follows. Core component of nucleosome. Nucleosomes wrap and compact DNA into chromatin, limiting DNA accessibility to the cellular machineries which require DNA as a template. Histones thereby play a central role in transcription regulation, DNA repair, DNA replication and chromosomal stability. DNA accessibility is regulated via a complex set of post-translational modifications of histones, also called histone code, and nucleosome remodeling. The chain is Histone H3 (his-2) from Caenorhabditis elegans.